Here is a 231-residue protein sequence, read N- to C-terminus: MAKLTKRQKAIAEKIEAGKAYNFEEAATLLASLPAAKFVESYDIAVNLGVDPRKSDQVVRSATVLPHGTGKTVRVAVFTQGPAAEAALAAGADRVGMDDLAAEMKGGDLNYDVVIASPDAMRVVGQLGQVLGPRGLMPNPKVGTVTPDVATAVKNAKAGQVRYRTDKNGIIHTSVGKIGFEADKLKENVEALIADLKRIKPASSKGIYVKRVTLSTTMGPGLVIDQSSLNV.

This sequence belongs to the universal ribosomal protein uL1 family. As to quaternary structure, part of the 50S ribosomal subunit.

Binds directly to 23S rRNA. The L1 stalk is quite mobile in the ribosome, and is involved in E site tRNA release. Its function is as follows. Protein L1 is also a translational repressor protein, it controls the translation of the L11 operon by binding to its mRNA. The sequence is that of Large ribosomal subunit protein uL1 from Pseudomonas putida (strain ATCC 700007 / DSM 6899 / JCM 31910 / BCRC 17059 / LMG 24140 / F1).